Here is a 168-residue protein sequence, read N- to C-terminus: RxLR effector protein CRE8 (168 aa).

The signal sequence occupies residues Met-1–Ala-23. Positions Arg-54 to Arg-69 match the RxLR-dEER motif.

It belongs to the RxLR effector family.

It localises to the secreted. It is found in the host cell. Effector that is involved in host plant infection. Contributes to virulence during the early infection stage, by inhibiting plant defense responses induced by both PAMP-triggered immunity (PTI) and effector-triggered immunity (ETI). In Phytophthora infestans (strain T30-4) (Potato late blight agent), this protein is RxLR effector protein CRE8.